A 164-amino-acid chain; its full sequence is Flavodoxin (164 aa).

The Flavodoxin-like domain maps to 4-160 (IGIFFGTDSG…RISKWVEQVK (157 aa)).

Belongs to the flavodoxin family. The cofactor is FMN.

Low-potential electron donor to a number of redox enzymes. In Helicobacter pylori (strain ATCC 700392 / 26695) (Campylobacter pylori), this protein is Flavodoxin (fldA).